The primary structure comprises 965 residues: Isoleucine--tRNA ligase (965 aa).

Residues 68-78 carry the 'HIGH' region motif; that stretch reads PYANGSLHMGH. Glutamate 582 contributes to the L-isoleucyl-5'-AMP binding site. Residues 623-627 carry the 'KMSKS' region motif; it reads KMSKS. Lysine 626 is an ATP binding site. Zn(2+) contacts are provided by cysteine 936, cysteine 939, cysteine 956, and cysteine 959.

It belongs to the class-I aminoacyl-tRNA synthetase family. IleS type 1 subfamily. In terms of assembly, monomer. Requires Zn(2+) as cofactor.

The protein localises to the cytoplasm. It carries out the reaction tRNA(Ile) + L-isoleucine + ATP = L-isoleucyl-tRNA(Ile) + AMP + diphosphate. Catalyzes the attachment of isoleucine to tRNA(Ile). As IleRS can inadvertently accommodate and process structurally similar amino acids such as valine, to avoid such errors it has two additional distinct tRNA(Ile)-dependent editing activities. One activity is designated as 'pretransfer' editing and involves the hydrolysis of activated Val-AMP. The other activity is designated 'posttransfer' editing and involves deacylation of mischarged Val-tRNA(Ile). This is Isoleucine--tRNA ligase from Prochlorococcus marinus subsp. pastoris (strain CCMP1986 / NIES-2087 / MED4).